The chain runs to 239 residues: Probable transcriptional regulatory protein lmo0369 (239 aa).

This sequence belongs to the TACO1 family. YeeN subfamily.

Its subcellular location is the cytoplasm. The chain is Probable transcriptional regulatory protein lmo0369 from Listeria monocytogenes serovar 1/2a (strain ATCC BAA-679 / EGD-e).